We begin with the raw amino-acid sequence, 692 residues long: Elongation factor G (692 aa).

The tr-type G domain occupies 8 to 282 (ENTRNIGIMA…AVIDYLPSPL (275 aa)). GTP contacts are provided by residues 17-24 (AHIDAGKT), 81-85 (DTPGH), and 135-138 (NKMD).

Belongs to the TRAFAC class translation factor GTPase superfamily. Classic translation factor GTPase family. EF-G/EF-2 subfamily.

The protein localises to the cytoplasm. Its function is as follows. Catalyzes the GTP-dependent ribosomal translocation step during translation elongation. During this step, the ribosome changes from the pre-translocational (PRE) to the post-translocational (POST) state as the newly formed A-site-bound peptidyl-tRNA and P-site-bound deacylated tRNA move to the P and E sites, respectively. Catalyzes the coordinated movement of the two tRNA molecules, the mRNA and conformational changes in the ribosome. This is Elongation factor G from Bacillus cereus (strain G9842).